Reading from the N-terminus, the 482-residue chain is Methylenetetrahydrofolate--tRNA-(uracil-5-)-methyltransferase TrmFO (482 aa).

11–16 (GAGLAG) serves as a coordination point for FAD.

It belongs to the MnmG family. TrmFO subfamily. It depends on FAD as a cofactor.

It localises to the cytoplasm. The enzyme catalyses uridine(54) in tRNA + (6R)-5,10-methylene-5,6,7,8-tetrahydrofolate + NADH + H(+) = 5-methyluridine(54) in tRNA + (6S)-5,6,7,8-tetrahydrofolate + NAD(+). The catalysed reaction is uridine(54) in tRNA + (6R)-5,10-methylene-5,6,7,8-tetrahydrofolate + NADPH + H(+) = 5-methyluridine(54) in tRNA + (6S)-5,6,7,8-tetrahydrofolate + NADP(+). Catalyzes the folate-dependent formation of 5-methyl-uridine at position 54 (M-5-U54) in all tRNAs. This Nitratidesulfovibrio vulgaris (strain DP4) (Desulfovibrio vulgaris) protein is Methylenetetrahydrofolate--tRNA-(uracil-5-)-methyltransferase TrmFO.